The chain runs to 302 residues: Bifunctional protein FolD (302 aa).

Residues 165–167 (GRS), serine 190, and isoleucine 231 each bind NADP(+).

Belongs to the tetrahydrofolate dehydrogenase/cyclohydrolase family. In terms of assembly, homodimer.

The enzyme catalyses (6R)-5,10-methylene-5,6,7,8-tetrahydrofolate + NADP(+) = (6R)-5,10-methenyltetrahydrofolate + NADPH. The catalysed reaction is (6R)-5,10-methenyltetrahydrofolate + H2O = (6R)-10-formyltetrahydrofolate + H(+). The protein operates within one-carbon metabolism; tetrahydrofolate interconversion. Its function is as follows. Catalyzes the oxidation of 5,10-methylenetetrahydrofolate to 5,10-methenyltetrahydrofolate and then the hydrolysis of 5,10-methenyltetrahydrofolate to 10-formyltetrahydrofolate. This chain is Bifunctional protein FolD, found in Prochlorococcus marinus (strain MIT 9303).